The following is a 555-amino-acid chain: Exodeoxyribonuclease 7 large subunit (555 aa).

The protein belongs to the XseA family. Heterooligomer composed of large and small subunits.

It localises to the cytoplasm. The enzyme catalyses Exonucleolytic cleavage in either 5'- to 3'- or 3'- to 5'-direction to yield nucleoside 5'-phosphates.. Bidirectionally degrades single-stranded DNA into large acid-insoluble oligonucleotides, which are then degraded further into small acid-soluble oligonucleotides. The chain is Exodeoxyribonuclease 7 large subunit from Chlamydia felis (strain Fe/C-56) (Chlamydophila felis).